A 398-amino-acid chain; its full sequence is Elongation factor Tu (398 aa).

In terms of domain architecture, tr-type G spans 10 to 207; that stretch reads KPHVNIGTIG…TVDEYIPEPE (198 aa). The tract at residues 19–26 is G1; it reads GHVDHGKT. 19-26 contributes to the GTP binding site; the sequence is GHVDHGKT. A Mg(2+)-binding site is contributed by T26. A G2 region spans residues 63–67; it reads GITIN. The segment at 84–87 is G3; it reads DAPG. Residues 84 to 88 and 139 to 142 each bind GTP; these read DAPGH and NKVD. Positions 139-142 are G4; it reads NKVD. The G5 stretch occupies residues 177-179; the sequence is SAL.

It belongs to the TRAFAC class translation factor GTPase superfamily. Classic translation factor GTPase family. EF-Tu/EF-1A subfamily. As to quaternary structure, monomer.

It localises to the cytoplasm. It catalyses the reaction GTP + H2O = GDP + phosphate + H(+). GTP hydrolase that promotes the GTP-dependent binding of aminoacyl-tRNA to the A-site of ribosomes during protein biosynthesis. The polypeptide is Elongation factor Tu (Streptococcus sanguinis (strain SK36)).